We begin with the raw amino-acid sequence, 148 residues long: Glutamyl-tRNA(Gln) amidotransferase subunit C, mitochondrial (148 aa).

The protein belongs to the GatC family. As to quaternary structure, subunit of the heterotrimeric GatCAB amidotransferase (AdT) complex, composed of A, B and C subunits.

The protein localises to the mitochondrion. It carries out the reaction L-glutamyl-tRNA(Gln) + L-glutamine + ATP + H2O = L-glutaminyl-tRNA(Gln) + L-glutamate + ADP + phosphate + H(+). Allows the formation of correctly charged Gln-tRNA(Gln) through the transamidation of misacylated Glu-tRNA(Gln) in the mitochondria. The reaction takes place in the presence of glutamine and ATP through an activated gamma-phospho-Glu-tRNA(Gln). The sequence is that of Glutamyl-tRNA(Gln) amidotransferase subunit C, mitochondrial from Drosophila melanogaster (Fruit fly).